Reading from the N-terminus, the 584-residue chain is uncharacterized protein (584 aa).

PbH1 repeat units follow at residues Q100–H128, C139–P161, S173–G195, C196–G225, P236–G266, T313–R333, G334–Q356, S357–A382, G406–Q427, N456–T478, and S529–T554.

This is an uncharacterized protein from Bacillus subtilis (strain 168).